The primary structure comprises 144 residues: Large ribosomal subunit protein uL15 (144 aa).

Positions 1-57 are disordered; the sequence is MRFNELQPAKGSRFAGKRLGRGIGSGLGKTSGKGHKGQKARSGGYHKVGFEGGQMPL. The span at 21–31 shows a compositional bias: gly residues; sequence RGIGSGLGKTS.

Belongs to the universal ribosomal protein uL15 family. As to quaternary structure, part of the 50S ribosomal subunit.

Binds to the 23S rRNA. The sequence is that of Large ribosomal subunit protein uL15 from Dichelobacter nodosus (strain VCS1703A).